A 301-amino-acid chain; its full sequence is Probable alpha-L-glutamate ligase 1 (301 aa).

Positions 104 to 287 (MQLMSRRGIG…VAGAIIDFVE (184 aa)) constitute an ATP-grasp domain. Residues Lys-141, 178-179 (EY), Asp-187, and 211-213 (RSN) each bind ATP. Residues Asp-248, Glu-260, and Asn-262 each contribute to the Mg(2+) site. Residues Asp-248, Glu-260, and Asn-262 each coordinate Mn(2+).

Belongs to the RimK family. Requires Mg(2+) as cofactor. Mn(2+) serves as cofactor.

This is Probable alpha-L-glutamate ligase 1 from Shewanella baltica (strain OS185).